Consider the following 592-residue polypeptide: MMATCTPRKRKRYTLNADNDDSLLTDISSSKLRCAENLFPSPNKKHNYQSSVQKEDKSCSHQLHFPSSPLKTTENSRFSFANHSSLFKPAMSTVSFYSKEKYYLNPLERKLIRECRSICLATESGDKPIPSVTENIQRKPVCTKKNKKKQKSLTAKYQPNYKHIKSKSRNLKNSKPNQVTYKPVVDQENSCFPAKNYPNSPPRVLSQKIKPQVTLQGGAAFFVRKRNSLKKLPLEDKPLLLQKNLPEVPEGAPEAKQIPKSLLVDEKSSVKVQNARSKNEEKLRKNPSGAVVSSKECNLDKHDFPSENSLDENKTISPESVYPIFNVSSVNTKRPEEQSSVGSTACTNFLKQTNVPKNINSRDTNKGGKDQLVIDAGQKHFGTTVCKSCGMIYTASNPEDEIQHLQHHHRFLEGIKFVGWKRERVVAEFWDGKIVLVLPRDPSYAIKKVEDVQELVDLELGFQQTVPVCPDKTKTFLFIDEKRVVGCLIAEPIKQAFRVLSEPSASKECSRAWRCSDVPEPAICGISRIWVFRLKRRKRIARRLVDTVRNCFMFGCFLSTNEIAFSDPTPDGKLFATKYCNTPNFLVYNFHN.

2 positions are modified to phosphoserine: S41 and S85. Residues K267–S294 are disordered. S309 carries the phosphoserine modification. The CCHH-type zinc finger occupies T384–H408.

This sequence belongs to the acetyltransferase family. ECO subfamily.

The protein resides in the nucleus. It localises to the chromosome. It carries out the reaction L-lysyl-[protein] + acetyl-CoA = N(6)-acetyl-L-lysyl-[protein] + CoA + H(+). Functionally, acetyltransferase required for the establishment of sister chromatid cohesion. Couples the processes of cohesion and DNA replication to ensure that only sister chromatids become paired together. In contrast to the structural cohesins, the deposition and establishment factors are required only during the S phase. Acetylates the cohesin component SMC3. This is N-acetyltransferase ESCO2 (Esco2) from Mus musculus (Mouse).